A 470-amino-acid polypeptide reads, in one-letter code: Glutamate--tRNA ligase (470 aa).

Residues 12 to 22 (PSPTGIFHVGG) carry the 'HIGH' region motif. C103, C105, C125, and D127 together coordinate Zn(2+). The 'KMSKS' region signature appears at 236–240 (KLSKR). K239 contributes to the ATP binding site.

This sequence belongs to the class-I aminoacyl-tRNA synthetase family. Glutamate--tRNA ligase type 1 subfamily. As to quaternary structure, monomer. It depends on Zn(2+) as a cofactor.

It localises to the cytoplasm. The enzyme catalyses tRNA(Glu) + L-glutamate + ATP = L-glutamyl-tRNA(Glu) + AMP + diphosphate. Functionally, catalyzes the attachment of glutamate to tRNA(Glu) in a two-step reaction: glutamate is first activated by ATP to form Glu-AMP and then transferred to the acceptor end of tRNA(Glu). This is Glutamate--tRNA ligase from Frankia alni (strain DSM 45986 / CECT 9034 / ACN14a).